The primary structure comprises 88 residues: Putative carnobacteriocin-BM1 immunity protein (88 aa).

In terms of biological role, could impart immunity to carnobacteriocin-BM1 to naturally sensitive host strains. This is Putative carnobacteriocin-BM1 immunity protein from Carnobacterium maltaromaticum (Carnobacterium piscicola).